The sequence spans 78 residues: UPF0291 protein Exig_1097 (78 aa).

The disordered stretch occupies residues 57–78 (EEGTDVTPEKLKQAQEEERNKQ). A compositionally biased stretch (basic and acidic residues) spans 63 to 78 (TPEKLKQAQEEERNKQ).

It belongs to the UPF0291 family.

It is found in the cytoplasm. The polypeptide is UPF0291 protein Exig_1097 (Exiguobacterium sibiricum (strain DSM 17290 / CCUG 55495 / CIP 109462 / JCM 13490 / 255-15)).